Reading from the N-terminus, the 213-residue chain is Cell division protein SepF (213 aa).

The segment at 27–103 is disordered; it reads VDAPAPRRAP…GSLRGSAPTR (77 aa). 2 stretches are compositionally biased toward basic and acidic residues: residues 35-51 and 72-90; these read APVE…RFAD and DEDR…DRPA.

It belongs to the SepF family. In terms of assembly, homodimer. Interacts with FtsZ.

Its subcellular location is the cytoplasm. Functionally, cell division protein that is part of the divisome complex and is recruited early to the Z-ring. Probably stimulates Z-ring formation, perhaps through the cross-linking of FtsZ protofilaments. Its function overlaps with FtsA. The protein is Cell division protein SepF of Mycobacteroides abscessus (strain ATCC 19977 / DSM 44196 / CCUG 20993 / CIP 104536 / JCM 13569 / NCTC 13031 / TMC 1543 / L948) (Mycobacterium abscessus).